The following is a 94-amino-acid chain: Small ribosomal subunit protein uS19 (94 aa).

It belongs to the universal ribosomal protein uS19 family.

Protein S19 forms a complex with S13 that binds strongly to the 16S ribosomal RNA. The protein is Small ribosomal subunit protein uS19 of Dictyoglomus turgidum (strain DSM 6724 / Z-1310).